We begin with the raw amino-acid sequence, 376 residues long: Lactosylceramide 1,3-N-acetyl-beta-D-glucosaminyltransferase (376 aa).

Over 1–13 (MRLFVSRRVKRWK) the chain is Cytoplasmic. A helical; Signal-anchor for type II membrane protein transmembrane segment spans residues 14 to 34 (IFHFFVTCFILSFMVFWSPIN). At 35–376 (NYIMSHMKSY…NSYPCWAAFA (342 aa)) the chain is on the lumenal side. The N-linked (GlcNAc...) asparagine glycan is linked to Asn57.

Belongs to the glycosyltransferase 31 family. Highly expressed in adult spleen, placenta and cerebellar Purkinje cells where it colocalizes with HNK-1. Expressed at lower level in brain, lung, thymus and muscle.

The protein resides in the golgi apparatus membrane. The enzyme catalyses a beta-D-Gal-(1-&gt;4)-beta-D-Glc-(1&lt;-&gt;1)-Cer(d18:1(4E)) + UDP-N-acetyl-alpha-D-glucosamine = a beta-D-GlcNAc-(1-&gt;3)-beta-D-Gal-(1-&gt;4)-beta-D-Glc-(1&lt;-&gt;1)-Cer(d18:1(4E)) + UDP + H(+). It catalyses the reaction a neolactoside nLc4Cer(d18:1(4E)) + UDP-N-acetyl-alpha-D-glucosamine = a neolactoside IV(3)-beta-GlcNAc-nLc4Cer(d18:1(4E)) + UDP + H(+). The protein operates within protein modification; protein glycosylation. In terms of biological role, beta-1,3-N-acetylglucosaminyltransferase that plays a key role in the synthesis of lacto- or neolacto-series carbohydrate chains on glycolipids, notably by participating in biosynthesis of HNK-1 and Lewis X carbohydrate structures. Has strong activity toward lactosylceramide (LacCer) and neolactotetraosylceramide (nLc(4)Cer; paragloboside), resulting in the synthesis of Lc(3)Cer and neolactopentaosylceramide (nLc(5)Cer), respectively. Plays a central role in regulating neolacto-series glycolipid synthesis during embryonic development. This is Lactosylceramide 1,3-N-acetyl-beta-D-glucosaminyltransferase from Mus musculus (Mouse).